Consider the following 139-residue polypeptide: Large ribosomal subunit protein uL16 (139 aa).

Over residues 1-13 the composition is skewed to basic residues; sequence MLQPARRKYRKEQ. A disordered region spans residues 1 to 23; the sequence is MLQPARRKYRKEQKGRNTGISHS.

Belongs to the universal ribosomal protein uL16 family. As to quaternary structure, part of the 50S ribosomal subunit.

Its function is as follows. Binds 23S rRNA and is also seen to make contacts with the A and possibly P site tRNAs. The polypeptide is Large ribosomal subunit protein uL16 (Herminiimonas arsenicoxydans).